Consider the following 519-residue polypeptide: T-complex protein 11-like protein 2 (519 aa).

The tract at residues 1-30 (MPFNGEKQCVGEDQPSDSDSSRFSESMASL) is disordered. S16 is subject to Phosphoserine. The segment covering 17–29 (DSDSSRFSESMAS) has biased composition (low complexity).

It belongs to the TCP11 family. As to quaternary structure, interacts with FMNL2; this interaction promotes muscle-derived satellite cell (MDSC) migration and differentiation.

The protein localises to the cytoplasm. It is found in the cytoskeleton. In terms of biological role, promotes the migration of muscle-derived satellite cells (MDSCs) during differentiation throught interaction with FMNL2 and therefore may participate in microfilament assembly. This Homo sapiens (Human) protein is T-complex protein 11-like protein 2.